Consider the following 419-residue polypeptide: Squamosa promoter-binding-like protein 2 (419 aa).

Residues S77 to E96 are disordered. The SBP-type zinc-finger motif lies at T166–P243. Positions 169, 174, 191, 194, 210, 213, 217, and 229 each coordinate Zn(2+). The Bipartite nuclear localization signal motif lies at K226 to K242. Residues R230 to Y249 form a disordered region.

Zn(2+) is required as a cofactor.

It localises to the nucleus. Functionally, trans-acting factor that binds specifically to the consensus nucleotide sequence 5'-TNCGTACAA-3'. This is Squamosa promoter-binding-like protein 2 (SPL2) from Arabidopsis thaliana (Mouse-ear cress).